The primary structure comprises 278 residues: UPF0276 protein Swit_4400 (278 aa).

The protein belongs to the UPF0276 family.

In Rhizorhabdus wittichii (strain DSM 6014 / CCUG 31198 / JCM 15750 / NBRC 105917 / EY 4224 / RW1) (Sphingomonas wittichii), this protein is UPF0276 protein Swit_4400.